A 350-amino-acid polypeptide reads, in one-letter code: Lipase chaperone (350 aa).

Residues 12–32 (IVLYLILGCVVVCGVWYSFDV) form a helical membrane-spanning segment.

Belongs to the lipase chaperone family.

The protein resides in the cell inner membrane. Its function is as follows. May be involved in the folding of the extracellular lipase during its passage through the periplasm. This chain is Lipase chaperone (lifO), found in Xylella fastidiosa (strain 9a5c).